The sequence spans 667 residues: Probable export ATP-binding/permease protein MacB (667 aa).

The 239-residue stretch at 22–260 folds into the ABC transporter domain; it reads LRLAGVSRRF…PVEEVQPAAE (239 aa). 58–65 lines the ATP pocket; it reads GASGSGKS. Transmembrane regions (helical) follow at residues 292-312, 540-560, 601-621, and 630-650; these read LLTMLGIIIGITSVVSISAIG, LTLLLSLIAVISLVVGGIGVM, IGGVIGIGLSYGIGYLFALFV, and LGSIVTAFVCSTLIGIVFGFV.

Belongs to the ABC transporter superfamily. Macrolide exporter (TC 3.A.1.122) family. As to quaternary structure, probably part of a tripartite efflux system, which is composed of an inner membrane transporter, a periplasmic membrane fusion protein, and an outer membrane component.

The protein localises to the cell inner membrane. Functionally, probably part of a tripartite efflux system. The polypeptide is Probable export ATP-binding/permease protein MacB (Pseudomonas entomophila (strain L48)).